A 90-amino-acid polypeptide reads, in one-letter code: Large ribosomal subunit protein bL27 (90 aa).

Residues 1–22 form a disordered region; the sequence is MAHKKSGGSSSNGRDSAGRRLG.

The protein belongs to the bacterial ribosomal protein bL27 family.

This is Large ribosomal subunit protein bL27 from Caulobacter sp. (strain K31).